We begin with the raw amino-acid sequence, 120 residues long: Large ribosomal subunit protein uL22 (120 aa).

Residues 1-25 (MFVNKKYTAKGKNLPSSPKKVRPIA) are disordered.

This sequence belongs to the universal ribosomal protein uL22 family. In terms of assembly, part of the 50S ribosomal subunit.

This protein binds specifically to 23S rRNA; its binding is stimulated by other ribosomal proteins, e.g. L4, L17, and L20. It is important during the early stages of 50S assembly. It makes multiple contacts with different domains of the 23S rRNA in the assembled 50S subunit and ribosome. Functionally, the globular domain of the protein is located near the polypeptide exit tunnel on the outside of the subunit, while an extended beta-hairpin is found that lines the wall of the exit tunnel in the center of the 70S ribosome. The chain is Large ribosomal subunit protein uL22 from Borrelia duttonii (strain Ly).